A 345-amino-acid polypeptide reads, in one-letter code: S-adenosylmethionine:tRNA ribosyltransferase-isomerase (345 aa).

Belongs to the QueA family. As to quaternary structure, monomer.

It is found in the cytoplasm. The catalysed reaction is 7-aminomethyl-7-carbaguanosine(34) in tRNA + S-adenosyl-L-methionine = epoxyqueuosine(34) in tRNA + adenine + L-methionine + 2 H(+). It participates in tRNA modification; tRNA-queuosine biosynthesis. Transfers and isomerizes the ribose moiety from AdoMet to the 7-aminomethyl group of 7-deazaguanine (preQ1-tRNA) to give epoxyqueuosine (oQ-tRNA). The polypeptide is S-adenosylmethionine:tRNA ribosyltransferase-isomerase (Rhodospirillum rubrum (strain ATCC 11170 / ATH 1.1.1 / DSM 467 / LMG 4362 / NCIMB 8255 / S1)).